A 238-amino-acid chain; its full sequence is MESLSELQNPLLPRSPTHLHGPYPYPEASPAWPCREKIYSYLLGGAGPAHAHQLLDPGSLQLAVEAWYRPSCLLGRDKVKEPRPGSCETSFTEGREPPAGPTERSTEPGQAEEDVAIQTVSYGVQEEFQGQEGDPEEEESDATSTESESEDNFLTLPPRDHLGLTIFSMLCCFWPLGIAAFYFSQGTSKAISKGDFRLANTTSRRALFLATLSIAVGAGLYVAVVVALAAYMSQNGHS.

Disordered regions lie at residues 1-24, 78-111, and 126-155; these read MESLSELQNPLLPRSPTHLHGPYP, KVKEPRPGSCETSFTEGREPPAGPTERSTEPGQA, and EEFQGQEGDPEEEESDATSTESESEDNFLT. Residues 1–162 lie on the Extracellular side of the membrane; the sequence is MESLSELQNP…FLTLPPRDHL (162 aa). Positions 133 to 151 are enriched in acidic residues; that stretch reads GDPEEEESDATSTESESED. Residues 163-183 traverse the membrane as a helical segment; sequence GLTIFSMLCCFWPLGIAAFYF. The Cytoplasmic portion of the chain corresponds to 184 to 205; that stretch reads SQGTSKAISKGDFRLANTTSRR. Residues 206 to 226 form a helical membrane-spanning segment; it reads ALFLATLSIAVGAGLYVAVVV. Residues 227–238 are Extracellular-facing; sequence ALAAYMSQNGHS.

The protein belongs to the CD225/Dispanin family.

It localises to the membrane. The protein resides in the golgi apparatus. The protein localises to the cis-Golgi network. This chain is Synapse differentiation-inducing gene protein 1-like (SYNDIG1L), found in Bos taurus (Bovine).